We begin with the raw amino-acid sequence, 236 residues long: Uridylate kinase (236 aa).

ATP is bound at residue 10–13 (KLSG). A UMP-binding site is contributed by Gly52. ATP-binding residues include Gly53 and Arg57. UMP contacts are provided by residues Asp72 and 133–140 (TGNPFFTT). Residues Thr160, Tyr166, and Asp169 each contribute to the ATP site.

Belongs to the UMP kinase family. In terms of assembly, homohexamer.

It is found in the cytoplasm. It catalyses the reaction UMP + ATP = UDP + ADP. It functions in the pathway pyrimidine metabolism; CTP biosynthesis via de novo pathway; UDP from UMP (UMPK route): step 1/1. With respect to regulation, inhibited by UTP. In terms of biological role, catalyzes the reversible phosphorylation of UMP to UDP. The sequence is that of Uridylate kinase from Bacteroides fragilis (strain ATCC 25285 / DSM 2151 / CCUG 4856 / JCM 11019 / LMG 10263 / NCTC 9343 / Onslow / VPI 2553 / EN-2).